Here is a 239-residue protein sequence, read N- to C-terminus: Large ribosomal subunit protein uL3 (239 aa).

Gln151 is subject to N5-methylglutamine.

It belongs to the universal ribosomal protein uL3 family. Part of the 50S ribosomal subunit. Forms a cluster with proteins L14 and L19. In terms of processing, methylated by PrmB.

One of the primary rRNA binding proteins, it binds directly near the 3'-end of the 23S rRNA, where it nucleates assembly of the 50S subunit. The sequence is that of Large ribosomal subunit protein uL3 from Ruegeria sp. (strain TM1040) (Silicibacter sp.).